An 89-amino-acid polypeptide reads, in one-letter code: Small ribosomal subunit protein uS15 (89 aa).

It belongs to the universal ribosomal protein uS15 family. In terms of assembly, part of the 30S ribosomal subunit. Forms a bridge to the 50S subunit in the 70S ribosome, contacting the 23S rRNA.

One of the primary rRNA binding proteins, it binds directly to 16S rRNA where it helps nucleate assembly of the platform of the 30S subunit by binding and bridging several RNA helices of the 16S rRNA. Its function is as follows. Forms an intersubunit bridge (bridge B4) with the 23S rRNA of the 50S subunit in the ribosome. The sequence is that of Small ribosomal subunit protein uS15 from Azorhizobium caulinodans (strain ATCC 43989 / DSM 5975 / JCM 20966 / LMG 6465 / NBRC 14845 / NCIMB 13405 / ORS 571).